A 134-amino-acid chain; its full sequence is ATP synthase epsilon chain (134 aa).

The protein belongs to the ATPase epsilon chain family. In terms of assembly, F-type ATPases have 2 components, CF(1) - the catalytic core - and CF(0) - the membrane proton channel. CF(1) has five subunits: alpha(3), beta(3), gamma(1), delta(1), epsilon(1). CF(0) has three main subunits: a, b and c.

Its subcellular location is the cell membrane. Produces ATP from ADP in the presence of a proton gradient across the membrane. In Priestia megaterium (strain ATCC 12872 / QMB1551) (Bacillus megaterium), this protein is ATP synthase epsilon chain (atpC).